A 45-amino-acid chain; its full sequence is DNA replication protein repEB (45 aa).

Involved in T4 DNA replication. Important for the priming of leading strand DNA synthesis at oriE. Binds to ssDNA. This is DNA replication protein repEB (repEB) from Enterobacteria phage T4 (Bacteriophage T4).